The sequence spans 104 residues: Nucleoid-associated protein jk2011 (104 aa).

The protein belongs to the YbaB/EbfC family. Homodimer.

The protein localises to the cytoplasm. It is found in the nucleoid. Its function is as follows. Binds to DNA and alters its conformation. May be involved in regulation of gene expression, nucleoid organization and DNA protection. This is Nucleoid-associated protein jk2011 from Corynebacterium jeikeium (strain K411).